The sequence spans 404 residues: Argininosuccinate synthase (404 aa).

ATP contacts are provided by residues 10 to 18 (AYSGGVDTS) and Ala38. Tyr89 lines the L-citrulline pocket. An ATP-binding site is contributed by Gly119. L-aspartate contacts are provided by Thr121, Asn125, and Asp126. Asn125 provides a ligand contact to L-citrulline. Positions 129, 177, 186, 262, and 274 each coordinate L-citrulline.

It belongs to the argininosuccinate synthase family. Type 1 subfamily. As to quaternary structure, homotetramer.

Its subcellular location is the cytoplasm. The catalysed reaction is L-citrulline + L-aspartate + ATP = 2-(N(omega)-L-arginino)succinate + AMP + diphosphate + H(+). It participates in amino-acid biosynthesis; L-arginine biosynthesis; L-arginine from L-ornithine and carbamoyl phosphate: step 2/3. The sequence is that of Argininosuccinate synthase from Prochlorococcus marinus (strain MIT 9312).